Reading from the N-terminus, the 149-residue chain is Protein RhiC (149 aa).

An N-terminal signal peptide occupies residues 1 to 23 (MTATLRAFGWLAAFALTVTFAQG).

Its subcellular location is the periplasm. Functionally, may be involved in plant-microbe interaction. This Rhizobium leguminosarum bv. viciae protein is Protein RhiC (rhiC).